A 637-amino-acid chain; its full sequence is Acetolactate synthase 2, chloroplastic (637 aa).

A chloroplast-targeting transit peptide spans 1–73 (MASFSFFGTI…SSKYAPNVPR (73 aa)). Residues 35 to 69 (RRATRVSVSANSKKDQDRTASRRENPSTFSSKYAP) are disordered. Residues 46-59 (SKKDQDRTASRREN) are compositionally biased toward basic and acidic residues. Glu-120 serves as a coordination point for thiamine diphosphate. Residues Arg-222, 329-350 (HGTV…FGVR), and 372-391 (DIDS…VCCD) contribute to the FAD site. Residues 462–542 (QHQMWAAQFY…VKVLLINNQH (81 aa)) are thiamine pyrophosphate binding. Asp-513 and Asn-540 together coordinate Mg(2+).

This sequence belongs to the TPP enzyme family. It depends on Mg(2+) as a cofactor. Thiamine diphosphate is required as a cofactor.

The protein resides in the plastid. It is found in the chloroplast. It catalyses the reaction 2 pyruvate + H(+) = (2S)-2-acetolactate + CO2. It functions in the pathway amino-acid biosynthesis; L-isoleucine biosynthesis; L-isoleucine from 2-oxobutanoate: step 1/4. The protein operates within amino-acid biosynthesis; L-valine biosynthesis; L-valine from pyruvate: step 1/4. The polypeptide is Acetolactate synthase 2, chloroplastic (Brassica napus (Rape)).